We begin with the raw amino-acid sequence, 390 residues long: UPF0496 protein At1g20180 (390 aa).

2 consecutive transmembrane segments (helical) span residues 228–248 and 250–270; these read LGGYSLVITHSAIVITLLIIA and HSILGVFAAPALLGLCSFCLL.

It belongs to the UPF0496 family.

It is found in the membrane. The chain is UPF0496 protein At1g20180 from Arabidopsis thaliana (Mouse-ear cress).